Here is a 363-residue protein sequence, read N- to C-terminus: Peptide chain release factor 1 (363 aa).

The residue at position 237 (Gln237) is an N5-methylglutamine. The disordered stretch occupies residues 281–302; the sequence is QQAEDEKSHAEEQTIRRSLVAS. The segment covering 282-295 has biased composition (basic and acidic residues); it reads QAEDEKSHAEEQTI.

The protein belongs to the prokaryotic/mitochondrial release factor family. Post-translationally, methylated by PrmC. Methylation increases the termination efficiency of RF1.

It is found in the cytoplasm. Its function is as follows. Peptide chain release factor 1 directs the termination of translation in response to the peptide chain termination codons UAG and UAA. The sequence is that of Peptide chain release factor 1 from Psychromonas ingrahamii (strain DSM 17664 / CCUG 51855 / 37).